Here is a 468-residue protein sequence, read N- to C-terminus: Cysteine--tRNA ligase (468 aa).

C36 provides a ligand contact to Zn(2+). The 'HIGH' region signature appears at 38–48 (PTVYNRSHIGN). Residues C216, H241, and E245 each contribute to the Zn(2+) site. Positions 274 to 278 (KMSKS) match the 'KMSKS' region motif. K277 provides a ligand contact to ATP.

This sequence belongs to the class-I aminoacyl-tRNA synthetase family. Monomer. It depends on Zn(2+) as a cofactor.

It localises to the cytoplasm. The enzyme catalyses tRNA(Cys) + L-cysteine + ATP = L-cysteinyl-tRNA(Cys) + AMP + diphosphate. This is Cysteine--tRNA ligase from Parvibaculum lavamentivorans (strain DS-1 / DSM 13023 / NCIMB 13966).